A 494-amino-acid polypeptide reads, in one-letter code: Cytochrome P450 2A3 (494 aa).

A Phosphoserine modification is found at Ser-131. Lys-379 carries the post-translational modification N6-acetyllysine. Cys-439 contributes to the heme binding site.

Belongs to the cytochrome P450 family. Heme serves as cofactor. As to expression, lung.

Its subcellular location is the endoplasmic reticulum membrane. The protein localises to the microsome membrane. The enzyme catalyses an organic molecule + reduced [NADPH--hemoprotein reductase] + O2 = an alcohol + oxidized [NADPH--hemoprotein reductase] + H2O + H(+). In terms of biological role, cytochromes P450 are a group of heme-thiolate monooxygenases. In liver microsomes, this enzyme is involved in an NADPH-dependent electron transport pathway. It oxidizes a variety of structurally unrelated compounds, including steroids, fatty acids, and xenobiotics. The chain is Cytochrome P450 2A3 (Cyp2a3) from Rattus norvegicus (Rat).